The sequence spans 228 residues: Vacuolar-sorting protein snf7 (228 aa).

Coiled coils occupy residues 25 to 94 and 125 to 226; these read ILGL…QINA and EKVD…QAEM.

The protein belongs to the SNF7 family. A component of the endosomal sorting required for transport complex III (ESCRT-III).

The protein localises to the cytoplasm. The protein resides in the endosome membrane. Its function is as follows. Required for the sorting and concentration of proteins resulting in the entry of these proteins into the invaginating vesicles of the multivesicular body (MVB). Also required for the proteolytic cleavage of the transcription factor pacc-1 in response to alkaline ambient pH. The sequence is that of Vacuolar-sorting protein snf7 (vsp-3) from Neurospora crassa (strain ATCC 24698 / 74-OR23-1A / CBS 708.71 / DSM 1257 / FGSC 987).